Reading from the N-terminus, the 706-residue chain is Signal transducer and activator of transcription 1 (706 aa).

The 98-residue stretch at 477-574 (WCIGFISKND…EEMLRFFESE (98 aa)) folds into the SH2 domain.

Belongs to the transcription factor STAT family. Forms a homodimer or a heterodimer with a related family member. Expressed in adult and larval pharynx, head ganglia, tail ganglia, ventral nerve cord and body muscles.

It localises to the cytoplasm. The protein localises to the nucleus. Its function is as follows. Carries out a dual function: signal transduction and activation of transcription. Activated STAT proteins play a role in repression of dauer formation. Neuronal expression is held in check by negative signals through the TGF-beta pathway that target the daf-3 transcription factor. The sequence is that of Signal transducer and activator of transcription 1 from Caenorhabditis elegans.